Reading from the N-terminus, the 61-residue chain is uncharacterized protein (61 aa).

A run of 2 helical transmembrane segments spans residues 5–25 and 29–49; these read MLYF…SLLL and YILT…PWYT.

Its subcellular location is the membrane. This is an uncharacterized protein from Saccharomyces cerevisiae (strain ATCC 204508 / S288c) (Baker's yeast).